The primary structure comprises 166 residues: Ribosome maturation factor RimM (166 aa).

The 74-residue stretch at 90–163 (EGEFLVSQII…TVTIELLEGL (74 aa)) folds into the PRC barrel domain.

It belongs to the RimM family. In terms of assembly, binds ribosomal protein uS19.

The protein resides in the cytoplasm. In terms of biological role, an accessory protein needed during the final step in the assembly of 30S ribosomal subunit, possibly for assembly of the head region. Essential for efficient processing of 16S rRNA. May be needed both before and after RbfA during the maturation of 16S rRNA. It has affinity for free ribosomal 30S subunits but not for 70S ribosomes. The polypeptide is Ribosome maturation factor RimM (Oenococcus oeni (strain ATCC BAA-331 / PSU-1)).